A 403-amino-acid chain; its full sequence is 8-amino-7-oxononanoate synthase (403 aa).

Substrate is bound at residue arginine 25. 112–113 is a pyridoxal 5'-phosphate binding site; that stretch reads GY. Substrate is bound at residue histidine 137. 3 residues coordinate pyridoxal 5'-phosphate: serine 182, histidine 210, and threonine 239. The residue at position 242 (lysine 242) is an N6-(pyridoxal phosphate)lysine. A substrate-binding site is contributed by threonine 358.

This sequence belongs to the class-II pyridoxal-phosphate-dependent aminotransferase family. BioF subfamily. As to quaternary structure, homodimer. The cofactor is pyridoxal 5'-phosphate.

The catalysed reaction is 6-carboxyhexanoyl-[ACP] + L-alanine + H(+) = (8S)-8-amino-7-oxononanoate + holo-[ACP] + CO2. It functions in the pathway cofactor biosynthesis; biotin biosynthesis. In terms of biological role, catalyzes the decarboxylative condensation of pimeloyl-[acyl-carrier protein] and L-alanine to produce 8-amino-7-oxononanoate (AON), [acyl-carrier protein], and carbon dioxide. This Marinomonas sp. (strain MWYL1) protein is 8-amino-7-oxononanoate synthase.